The chain runs to 344 residues: Cell cycle control protein 50C (344 aa).

Residues 1 to 34 lie on the Cytoplasmic side of the membrane; the sequence is MEETPQHCLSRLPDNSALKQQELPAHRLYFTARR. Residues 35-55 traverse the membrane as a helical segment; the sequence is VLFVFFTTGIFCLCMGIILIL. Residues 56–306 lie on the Extracellular side of the membrane; sequence SARSTQEIEI…STLTWCGGNS (251 aa). Residues Asn-66 and Asn-261 are each glycosylated (N-linked (GlcNAc...) asparagine). The chain crosses the membrane as a helical span at residues 307-327; that stretch reads LFLGLAYTVTGAITWLASFTM. The Cytoplasmic portion of the chain corresponds to 328–344; the sequence is MAIHITLKNKQMSFFHQ.

The protein belongs to the CDC50/LEM3 family. Specifically expressed in testis.

The protein resides in the membrane. The chain is Cell cycle control protein 50C (TMEM30C) from Macaca fascicularis (Crab-eating macaque).